The chain runs to 137 residues: Fructose-bisphosphate aldolase C (137 aa).

The active-site Schiff-base intermediate with dihydroxyacetone-P is K3.

It belongs to the class I fructose-bisphosphate aldolase family. As to quaternary structure, homotetramer.

The enzyme catalyses beta-D-fructose 1,6-bisphosphate = D-glyceraldehyde 3-phosphate + dihydroxyacetone phosphate. The protein operates within carbohydrate degradation; glycolysis; D-glyceraldehyde 3-phosphate and glycerone phosphate from D-glucose: step 4/4. This Gallus gallus (Chicken) protein is Fructose-bisphosphate aldolase C (ALDOC).